The primary structure comprises 325 residues: D site-binding protein (325 aa).

Disordered regions lie at residues 1–100, 124–198, and 212–255; these read MARP…PGLL, LEHG…DPDT, and LALS…EQKD. Gly residues predominate over residues 17-28; it reads GPTGAPPGGGAL. 2 stretches are compositionally biased toward low complexity: residues 29-38 and 71-80; these read LGLRSLLQGT and AGPADASAGA. Ser-86 carries the phosphoserine modification. A compositionally biased stretch (low complexity) spans 88–100; that stretch reads RGRPGAAPGPGLL. Pro residues predominate over residues 129-153; it reads PPSPPPPGGPSPAPSPVRTPAPSPR. The segment covering 166–176 has biased composition (low complexity); it reads PGHAPARAALG. Over residues 221–236 the composition is skewed to basic and acidic residues; sequence ETFDPRRHRFSEEELK. Residues 255–318 form the bZIP domain; the sequence is DEKYWSRRYK…SHYRAVLSRY (64 aa). Positions 257–279 are basic motif; it reads KYWSRRYKNNEAAKRSRDARRLK. Residues 283–297 are leucine-zipper; sequence ISVRAAFLEKENALL.

The protein belongs to the bZIP family. PAR subfamily. Binds DNA as a homodimer or a heterodimer. Can form a heterodimer with TEF.

The protein resides in the nucleus. Functionally, this transcriptional activator recognizes and binds to the sequence 5'-RTTAYGTAAY-3' found in the promoter of genes such as albumin, CYP2A4 and CYP2A5. It is not essential for circadian rhythm generation, but modulates important clock output genes. May be a direct target for regulation by the circadian pacemaker component clock. May affect circadian period and sleep regulation. The chain is D site-binding protein (DBP) from Bos taurus (Bovine).